Reading from the N-terminus, the 751-residue chain is Catalase-peroxidase (751 aa).

The tract at residues 1-21 (MSNESKCPFHQTAGGGTTNRD) is disordered. The segment at residues 90–244 (WHSAGTYRIG…LAAVQMGLIY (155 aa)) is a cross-link (tryptophyl-tyrosyl-methioninium (Trp-Tyr) (with M-270)). The active-site Proton acceptor is the His-91. The disordered stretch occupies residues 195–227 (YGKDQVKAQPPGQGDLVAEPAKHGEEQNRDLSA). The segment covering 214 to 227 (PAKHGEEQNRDLSA) has biased composition (basic and acidic residues). Residues 244–270 (YVNPEGPEGNPDPVASGKDIRETFGRM) constitute a cross-link (tryptophyl-tyrosyl-methioninium (Tyr-Met) (with W-90)). His-285 lines the heme b pocket. The disordered stretch occupies residues 365–387 (AHQWRPKEGKGAGTVPDAHDPGK).

This sequence belongs to the peroxidase family. Peroxidase/catalase subfamily. Homodimer or homotetramer. Heme b is required as a cofactor. Formation of the three residue Trp-Tyr-Met cross-link is important for the catalase, but not the peroxidase activity of the enzyme.

The catalysed reaction is H2O2 + AH2 = A + 2 H2O. It catalyses the reaction 2 H2O2 = O2 + 2 H2O. Functionally, bifunctional enzyme with both catalase and broad-spectrum peroxidase activity. This Pseudomonas putida (strain ATCC 700007 / DSM 6899 / JCM 31910 / BCRC 17059 / LMG 24140 / F1) protein is Catalase-peroxidase.